Reading from the N-terminus, the 611-residue chain is Chaperone protein DnaK (611 aa).

Residue T173 is modified to Phosphothreonine; by autocatalysis. 2 disordered regions span residues 525–548 (DNIS…ALEG) and 573–611 (YQQA…EDKK). The span at 529 to 542 (EEDKSNAESKKDAL) shows a compositional bias: basic and acidic residues. The span at 574–591 (QQAQQAQQQAQDGAQQTQ) shows a compositional bias: low complexity. Positions 599–611 (AEFKEVNDDEDKK) are enriched in basic and acidic residues.

The protein belongs to the heat shock protein 70 family.

In terms of biological role, acts as a chaperone. The polypeptide is Chaperone protein DnaK (Staphylococcus haemolyticus (strain JCSC1435)).